Reading from the N-terminus, the 351-residue chain is Methylthioribose-1-phosphate isomerase (351 aa).

Residues 53-55 (RGA), Arg96, and Gln205 each bind substrate. The Proton donor role is filled by Asp246. 256–257 (NK) serves as a coordination point for substrate.

The protein belongs to the eIF-2B alpha/beta/delta subunits family. MtnA subfamily.

It carries out the reaction 5-(methylsulfanyl)-alpha-D-ribose 1-phosphate = 5-(methylsulfanyl)-D-ribulose 1-phosphate. It functions in the pathway amino-acid biosynthesis; L-methionine biosynthesis via salvage pathway; L-methionine from S-methyl-5-thio-alpha-D-ribose 1-phosphate: step 1/6. Catalyzes the interconversion of methylthioribose-1-phosphate (MTR-1-P) into methylthioribulose-1-phosphate (MTRu-1-P). The chain is Methylthioribose-1-phosphate isomerase from Synechocystis sp. (strain ATCC 27184 / PCC 6803 / Kazusa).